Here is a 140-residue protein sequence, read N- to C-terminus: Large ribosomal subunit protein bL17 (140 aa).

This sequence belongs to the bacterial ribosomal protein bL17 family. As to quaternary structure, part of the 50S ribosomal subunit. Contacts protein L32.

The polypeptide is Large ribosomal subunit protein bL17 (Rhizobium rhizogenes (strain K84 / ATCC BAA-868) (Agrobacterium radiobacter)).